The primary structure comprises 430 residues: UDP-N-acetylglucosamine 1-carboxyvinyltransferase 1 (430 aa).

22 to 23 (KN) serves as a coordination point for phosphoenolpyruvate. Residue R102 participates in UDP-N-acetyl-alpha-D-glucosamine binding. The active-site Proton donor is C126. The residue at position 126 (C126) is a 2-(S-cysteinyl)pyruvic acid O-phosphothioketal. UDP-N-acetyl-alpha-D-glucosamine contacts are provided by residues 131–135 (RPVDL), 172–175 (KVSV), D317, and I339.

The protein belongs to the EPSP synthase family. MurA subfamily.

The protein resides in the cytoplasm. The catalysed reaction is phosphoenolpyruvate + UDP-N-acetyl-alpha-D-glucosamine = UDP-N-acetyl-3-O-(1-carboxyvinyl)-alpha-D-glucosamine + phosphate. The protein operates within cell wall biogenesis; peptidoglycan biosynthesis. Functionally, cell wall formation. Adds enolpyruvyl to UDP-N-acetylglucosamine. This chain is UDP-N-acetylglucosamine 1-carboxyvinyltransferase 1, found in Mesorhizobium japonicum (strain LMG 29417 / CECT 9101 / MAFF 303099) (Mesorhizobium loti (strain MAFF 303099)).